A 481-amino-acid chain; its full sequence is Probable Xaa-Pro aminopeptidase PEPP (481 aa).

4 residues coordinate Mn(2+): aspartate 265, aspartate 276, glutamate 399, and glutamate 439.

It belongs to the peptidase M24B family. Requires Mn(2+) as cofactor.

It catalyses the reaction Release of any N-terminal amino acid, including proline, that is linked to proline, even from a dipeptide or tripeptide.. In terms of biological role, catalyzes the removal of a penultimate prolyl residue from the N-termini of peptides. This chain is Probable Xaa-Pro aminopeptidase PEPP (PEPP), found in Uncinocarpus reesii (strain UAMH 1704).